Consider the following 236-residue polypeptide: 3-deoxy-D-manno-octulosonic acid kinase (236 aa).

Aspartate 166 is a catalytic residue.

It belongs to the protein kinase superfamily. KdkA/RfaP family.

The protein resides in the cell inner membrane. It catalyses the reaction an alpha-Kdo-(2-&gt;6)-lipid IVA + ATP = a 4-O-phospho-alpha-Kdo-(2-&gt;6)-lipid IVA + ADP + H(+). It functions in the pathway bacterial outer membrane biogenesis; LPS core biosynthesis. Functionally, catalyzes the ATP-dependent phosphorylation of the 3-deoxy-D-manno-octulosonic acid (Kdo) residue in Kdo-lipid IV(A) at the 4-OH position. The chain is 3-deoxy-D-manno-octulosonic acid kinase from Photobacterium profundum (strain SS9).